The sequence spans 82 residues: MSEVSSAPVRRPFHRRRKTCPFSGANAPRIDYKDVRLLQRYISERGKIVPSRITAVSQKKQRELAQAIKRARFLGLLPYVVA.

The protein belongs to the bacterial ribosomal protein bS18 family. As to quaternary structure, part of the 30S ribosomal subunit. Forms a tight heterodimer with protein bS6.

Binds as a heterodimer with protein bS6 to the central domain of the 16S rRNA, where it helps stabilize the platform of the 30S subunit. The chain is Small ribosomal subunit protein bS18 from Rhizobium rhizogenes (strain K84 / ATCC BAA-868) (Agrobacterium radiobacter).